The following is a 294-amino-acid chain: Acetylglutamate kinase (294 aa).

Substrate is bound by residues 67–68 (GG), Arg89, and Asn193.

It belongs to the acetylglutamate kinase family. ArgB subfamily.

It is found in the cytoplasm. It carries out the reaction N-acetyl-L-glutamate + ATP = N-acetyl-L-glutamyl 5-phosphate + ADP. It participates in amino-acid biosynthesis; L-arginine biosynthesis; N(2)-acetyl-L-ornithine from L-glutamate: step 2/4. Catalyzes the ATP-dependent phosphorylation of N-acetyl-L-glutamate. The sequence is that of Acetylglutamate kinase from Leptospira interrogans serogroup Icterohaemorrhagiae serovar copenhageni (strain Fiocruz L1-130).